Reading from the N-terminus, the 344-residue chain is Meiotic recombination protein DMC1 homolog B (344 aa).

133 to 140 (GEFRSGKT) contributes to the ATP binding site. DsDNA is bound at residue Arg235. The ssDNA site is built by Arg235, Phe238, Arg241, Arg247, and Arg315. 2 residues coordinate dsDNA: Arg241 and Arg247.

Belongs to the RecA family. DMC1 subfamily. As to expression, highly expressed in spikelets. Expressed in meiotic young panicles.

The protein localises to the nucleus. In terms of biological role, recombinase that may participate in meiotic recombination, specifically in homologous strand assimilation, which is required for the resolution of meiotic double-strand breaks. Exhibits DNA-dependent ATPase activity when bound to single-stranded DNA (ssDNA). Mediates renaturation of homologous complementary strands as well as assimilation of single strands into homologous supercoiled duplexes leading to D-loop formation. Binds circular single-stranded DNA (ssDNA) and circular double-stranded DNA (dsDNA) in vitro. Catalyzes DNA homologous renaturation and DNA strand exchange. The rates of these activities are dependent on the state of ATP hydrolysis. Forms helical filaments along ssDNA and dsDNA, and promotes strand exchange between ssDNA and dsDNA with long DNA substrates of several thousand base pairs. The presence of the replication protein A is not required for this activity. Seems to be required for homologous pairing and subsequent chromosome segregation during male meiosis. May be not directly required for homologous pairing during male meiosis. Required for synaptonemal complex assembly and crossover formation. Functions redundantly with DMC1A. The chain is Meiotic recombination protein DMC1 homolog B from Oryza sativa subsp. japonica (Rice).